The primary structure comprises 411 residues: Inhibin beta B chain (411 aa).

The N-terminal stretch at 1 to 28 is a signal peptide; the sequence is MDGLPGRALGAACLLLLVAGWLGPEAWG. The tract at residues 28 to 69 is disordered; that stretch reads GSPTPPPSPAAPPPPPPPGAPGGSQDTCTSCGGGGGGFRRPE. A propeptide spanning residues 29–296 is cleaved from the precursor; it reads SPTPPPSPAA…GDSRHRIRKR (268 aa). A compositionally biased stretch (pro residues) spans 30 to 47; it reads PTPPPSPAAPPPPPPPGA. Asn-97 carries an N-linked (GlcNAc...) asparagine glycan. 4 disulfides stabilise this stretch: Cys-300/Cys-308, Cys-307/Cys-376, Cys-336/Cys-408, and Cys-340/Cys-410.

This sequence belongs to the TGF-beta family. As to quaternary structure, dimeric, linked by one or more disulfide bonds. Inhibin B is a dimer of alpha and beta-B. Activin B is a homodimer of beta-B. Activin AB is a dimer of beta-A and beta-B. Interacts with FST and FSTL3. Activin B interacts with BMPR2. Uterus, testis, ovary, lung, kidney, brain, CJ7 embryonic stem cells, and possibly in liver.

It localises to the secreted. Inhibins and activins inhibit and activate, respectively, the secretion of follitropin by the pituitary gland. Inhibins/activins are involved in regulating a number of diverse functions such as hypothalamic and pituitary hormone secretion, gonadal hormone secretion, germ cell development and maturation, erythroid differentiation, insulin secretion, nerve cell survival, embryonic axial development or bone growth, depending on their subunit composition. Inhibins appear to oppose the functions of activins. Functionally, activin B is a dimer of alpha and beta-B that plays a role in several essential biological processes including embryonic development, stem cell maintenance and differentiation, haematopoiesis, cell proliferation and wound healing. Signals through type I receptor ACVR1C, abundantly expressed in pancreatic beta cells, and type II receptors like ACVR2A. Upon ligand binding, these receptors phosphorylate intracellular signaling mediators SMAD2 and SMAD3, which form a complex with SMAD4, translocate to the nucleus, and regulate gene expression. Plays a crucial role in the induction of hepcidin by inflammation through activation of ACVR1C and subsequent phosphorylation of SMAD1/5/8. Regulates adipocyte lipid metabolism by decreasing non-esterified fatty acids and glycerol release and increases intracellular triglyceride content. Stimulates wound healing by promoting cell migration and hair follicle regeneration through the JNK and ERK signaling pathways downstream of RHOA. Its function is as follows. Inhibin B is a dimer of alpha and beta-B that plays a crucial role in the regulation of the reproductive system by inhibiting the secretion of follicle-stimulating hormone (FSH) from the anterior pituitary gland. Thereby, maintains reproductive homeostasis in both males and females. Acts as a more potent suppressor of FSH release than inhibin A. Functions as competitive receptor antagonist binding activin type II receptors with high affinity in the presence of the TGF-beta type III coreceptor/TGFBR3L. This is Inhibin beta B chain (Inhbb) from Mus musculus (Mouse).